Reading from the N-terminus, the 218-residue chain is Large ribosomal subunit protein uL16 (218 aa).

Belongs to the universal ribosomal protein uL16 family. In terms of assembly, component of the large ribosomal subunit. Mature ribosomes consist of a small (40S) and a large (60S) subunit. The 40S subunit contains about 33 different proteins and 1 molecule of RNA (18S). The 60S subunit contains about 49 different proteins and 3 molecules of RNA (28S, 5.8S and 5S).

The sequence is that of Large ribosomal subunit protein uL16 (RpL10) from Drosophila melanogaster (Fruit fly).